Reading from the N-terminus, the 40-residue chain is U2-myrmicitoxin-Tb1a (40 aa).

Residues 1–3 form the signal peptide; sequence AEA. A propeptide spanning residues 4-29 is cleaved from the precursor; that stretch reads MAEAMADAMADAMADAMADAMAEAAA. Arginine amide is present on arginine 39.

This sequence belongs to the formicidae venom precursor-01 superfamily. In terms of tissue distribution, expressed by the venom gland.

It localises to the secreted. In terms of biological role, venom protein with unknown function. Does not induce paralysis when a high dose is administered by intrathoracic injection into the blowfly Lucilia caesar. The protein is U2-myrmicitoxin-Tb1a of Tetramorium bicarinatum (Tramp ant).